The following is a 176-amino-acid chain: Sarcoplasmic calcium-binding protein (176 aa).

T1 is modified (N-acetylthreonine). EF-hand domains lie at 3–38 (YLVS…FTDL), 55–90 (KWWD…AFLA), 91–126 (TMTA…FGHE), and 127–160 (NESV…SFVT). Ca(2+)-binding residues include D16, N18, D20, and N27. 5 residues coordinate Ca(2+): D104, D106, D108, S110, and E115.

Its function is as follows. Like parvalbumins, SCPs seem to be more abundant in fast contracting muscles, but no functional relationship can be established from this distribution. This chain is Sarcoplasmic calcium-binding protein, found in Mizuhopecten yessoensis (Japanese scallop).